An 88-amino-acid chain; its full sequence is Cell division topological specificity factor (88 aa).

This sequence belongs to the MinE family.

In terms of biological role, prevents the cell division inhibition by proteins MinC and MinD at internal division sites while permitting inhibition at polar sites. This ensures cell division at the proper site by restricting the formation of a division septum at the midpoint of the long axis of the cell. In Escherichia coli (strain SMS-3-5 / SECEC), this protein is Cell division topological specificity factor.